Here is a 171-residue protein sequence, read N- to C-terminus: Histone H1, gonadal (171 aa).

Disordered stretches follow at residues 1–40 and 133–171; these read AASP…AHPP and AKAK…KAKP. Basic residues predominate over residues 9 to 35; it reads ASPRKSPKKSPRKSPKKKSPRKRKARS. Residues 37–111 enclose the H15 domain; that stretch reads AHPPVIDMIT…GATGRFRVGA (75 aa).

This sequence belongs to the histone H1/H5 family. As to expression, sperm.

The protein resides in the nucleus. It is found in the chromosome. Functionally, histones H1 are necessary for the condensation of nucleosome chains into higher-order structures. The polypeptide is Histone H1, gonadal (Echinolampas crassa (Sea urchin)).